Reading from the N-terminus, the 146-residue chain is BCL7-like protein (146 aa).

The segment at methionine 59–proline 146 is disordered. Composition is skewed to polar residues over residues asparagine 75–threonine 90 and aspartate 113–serine 134. Over residues serine 135–proline 146 the composition is skewed to basic and acidic residues.

The protein belongs to the BCL7 family. Ubiquitous.

It is found in the nucleus. In terms of biological role, required for the terminal differentiation of seam cells, and the differentiation of distal tip cells important for normal somatic gonad and germ cell development. Plays a role in the Wnt signaling pathway, regulating the expression of beta-catenin homologs wrm-1, bar-1 and sys-1, and the localization of wrm-1 and the wnt signaling pathway component pop-1 during asymmetric cell division of seam cells and the Z-cell lineage of the somatic gonad, respectively. May have a pro-apoptotic role, possibly linked to the negative regulation of expression of anti-apoptotic factor ced-9. This is BCL7-like protein from Caenorhabditis elegans.